The chain runs to 526 residues: NAD(P)H-quinone oxidoreductase subunit 2 (526 aa).

The next 14 membrane-spanning stretches (helical) occupy residues 16–36 (ILPE…DLIV), 43–63 (WIPY…YLGW), 80–100 (LSIL…MMSV), 107–127 (GTAL…GMFL), 133–153 (LVMI…LTGY), 168–188 (LLIG…LYGL), 211–231 (LALA…ISAV), 245–265 (PTPV…ALAI), 279–299 (WHFI…VVAL), 307–327 (MLAY…VAGT), 335–355 (IFYL…VILF), 379–399 (LGLS…GFFG), 401–421 (IYLF…LGLI), and 469–489 (LVLS…LFVI).

This sequence belongs to the complex I subunit 2 family. NDH-1 can be composed of about 15 different subunits; different subcomplexes with different compositions have been identified which probably have different functions.

It localises to the cellular thylakoid membrane. It catalyses the reaction a plastoquinone + NADH + (n+1) H(+)(in) = a plastoquinol + NAD(+) + n H(+)(out). The catalysed reaction is a plastoquinone + NADPH + (n+1) H(+)(in) = a plastoquinol + NADP(+) + n H(+)(out). Functionally, NDH-1 shuttles electrons from an unknown electron donor, via FMN and iron-sulfur (Fe-S) centers, to quinones in the respiratory and/or the photosynthetic chain. The immediate electron acceptor for the enzyme in this species is believed to be plastoquinone. Couples the redox reaction to proton translocation, and thus conserves the redox energy in a proton gradient. Cyanobacterial NDH-1 also plays a role in inorganic carbon-concentration. The polypeptide is NAD(P)H-quinone oxidoreductase subunit 2 (Picosynechococcus sp. (strain ATCC 27264 / PCC 7002 / PR-6) (Agmenellum quadruplicatum)).